The sequence spans 312 residues: tRNA pseudouridine synthase B (312 aa).

Asp48 (nucleophile) is an active-site residue.

It belongs to the pseudouridine synthase TruB family. Type 1 subfamily.

It carries out the reaction uridine(55) in tRNA = pseudouridine(55) in tRNA. Functionally, responsible for synthesis of pseudouridine from uracil-55 in the psi GC loop of transfer RNAs. In Haemophilus influenzae (strain ATCC 51907 / DSM 11121 / KW20 / Rd), this protein is tRNA pseudouridine synthase B.